The primary structure comprises 122 residues: uncharacterized protein (122 aa).

The protein to B.subtilis YpdA.

This is an uncharacterized protein from Bacillus licheniformis.